We begin with the raw amino-acid sequence, 99 residues long: uncharacterized protein (99 aa).

The N-terminal stretch at 1–17 (MMMNAFFPAMALIVLVG) is a signal peptide. C18 is lipidated: N-palmitoyl cysteine. Residue C18 is the site of S-diacylglycerol cysteine attachment.

The protein resides in the cell membrane. This is an uncharacterized protein from Escherichia coli O6:H1 (strain CFT073 / ATCC 700928 / UPEC).